Here is a 416-residue protein sequence, read N- to C-terminus: Protein PBN1 (416 aa).

Residues 1–385 (MVTRHRVTVL…PDTKDYSKIK (385 aa)) lie on the Lumenal side of the membrane. N-linked (GlcNAc...) asparagine glycosylation is found at asparagine 24, asparagine 85, asparagine 120, asparagine 212, and asparagine 365. Residues 386 to 405 (NGTLLCLLISIIYIFSKVFG) traverse the membrane as a helical; Signal-anchor for type III membrane protein segment. The Cytoplasmic portion of the chain corresponds to 406–416 (NNKKKRSVKRE).

The protein belongs to the PIGX family. In terms of processing, N-glycosylated.

The protein resides in the endoplasmic reticulum membrane. It participates in glycolipid biosynthesis; glycosylphosphatidylinositol-anchor biosynthesis. In terms of biological role, required for proper folding and/or the stability of a subset of proteins in the endoplasmic reticulum. Aids the autocatalytic processing of PRB1. Component of glycosylphosphatidylinositol-mannosyltransferase 1 which transfers the first of the 4 mannoses in the GPI-anchor precursors during GPI-anchor biosynthesis. Probably acts by stabilizing the mannosyltransferase GPI14. The sequence is that of Protein PBN1 (PBN1) from Saccharomyces cerevisiae (strain ATCC 204508 / S288c) (Baker's yeast).